A 526-amino-acid chain; its full sequence is MALLNTPVLAAATAVSFGFYLAGLFVYRVFYHRLSHIPGPRLAAFTVYYQSYYDFFPHQGQFLWKLVELHKAYGPIIRIGPDEVHVNDARFYKEMYGSSVHKRNKSPIWYWMDGLGAVGDQSMFITLDHDHHRLRKAGLGTYFSKRKVQELEPRVKEKVLLLRQRLLERAGRGAINLKDAFGGMALDIITQYCFNQCMGALDRDDLGREWNQLMAAGVKINPFARTFPTVARTLLRLPKWVLGVSGMVSTTGEFLDLADRLSANARNEAIRDLQEGKYTLTDDADSRTVLHSMMRSDVLPEHEKGERRLQADGMTLIAAGFDTTSRTLTVVFYHLLAKPAMRARVLEEIRTLMPTPSSPLPTVAQLEQLPYLTCVIHEGTRLAHGVAGRLVRIAPEEDLVYHNSSDDTEYTIPRGATFGQSSYLVHTDESIYPNPHDFIPERYWSDDGKPTDAERYLVAFGKGTRMCSGINLAFAELYLTIAALLGAVDMKLAPGTTEHDVSLVAELFVGVLPESPGVRVNVVGSL.

A helical transmembrane segment spans residues proline 7 to tyrosine 27. N-linked (GlcNAc...) asparagine glycosylation is present at asparagine 403. Cysteine 467 is a heme binding site.

This sequence belongs to the cytochrome P450 family. The cofactor is heme.

It localises to the membrane. Its pathway is mycotoxin biosynthesis. Its function is as follows. Cytochrome P450 monooxygenase; part of the gene cluster that mediates the biosynthesis of UCS1025A, a member of the pyrrolizidinone family that acts as a strong telomerase inhibitor and displays potent antibacterial and antitumor properties. These compounds share a hemiaminal-containing pyrrolizidinone core fused with a gamma-lactone, giving a furopyrrolizidine that is connected to a decalin fragment. The polyketide synthase module (PKS) of the PKS-NRPS ucsA is responsible for the synthesis of the polyketide backbone via the condensation of an acetyl-CoA starter unit with 6 malonyl-CoA units. The downstream nonribosomal peptide synthetase (NRPS) module then amidates the carboxyl end of the polyketide with a 2S,3S-methylproline derived from L-isoleucine by the 2-oxoglutarate-dependent dioxygenase ucsF which converts L-isoleucine to (4S,5S)-4-methylpyrroline-5-carboxylate that is further converted to 2S,3S-methylproline by the pyrroline-5-carboxylate reductase ucsG. Reductive release of the completed aminoacyl polyketide from the assembly line can form the 3-pyrrolin-2-one structure via an intramolecular Knoevenagel reaction. Because ucsA lacks a designated enoylreductase (ER) domain, the required activity is provided the enoyl reductase ucsL. This keto acyclic precursor is the substrate of the Diels-Alderase ucsH, that catalyzes the Diels-Alder cycloaddition. Oxidation of the 3S-methyl group to a carboxylate by the cytochrome P450 monooxygenase ucsK allows an oxa-Michael cyclization that might involve the reductase/dehydrogenase ucsI and which furnishes the furopyrrolizidine. The oxidase ucsJ likely plays a critical role in stereoselective reduction of the C5-C6 double bond to afford the required R-configured carboxylate group. Further enolization and oxidation at C5 by an unidentified enzyme affords the last intermediate that can undergo oxa-Michael cyclization to yield UCS1025A. In Acremonium sp, this protein is Cytochrome P450 monooxygenase ucsK.